A 240-amino-acid polypeptide reads, in one-letter code: Purine nucleoside phosphorylase DeoD-type (240 aa).

Residue His-5 participates in a purine D-ribonucleoside binding. Phosphate-binding positions include Gly-21, Arg-25, Arg-44, and 88 to 91; that span reads RVGS. A purine D-ribonucleoside-binding positions include 181 to 183 and 205 to 206; these read EME and SD. The active-site Proton donor is Asp-206.

The protein belongs to the PNP/UDP phosphorylase family. As to quaternary structure, homohexamer; trimer of homodimers.

It catalyses the reaction a purine D-ribonucleoside + phosphate = a purine nucleobase + alpha-D-ribose 1-phosphate. It carries out the reaction a purine 2'-deoxy-D-ribonucleoside + phosphate = a purine nucleobase + 2-deoxy-alpha-D-ribose 1-phosphate. In terms of biological role, catalyzes the reversible phosphorolytic breakdown of the N-glycosidic bond in the beta-(deoxy)ribonucleoside molecules, with the formation of the corresponding free purine bases and pentose-1-phosphate. This chain is Purine nucleoside phosphorylase DeoD-type, found in Enterobacter sp. (strain 638).